We begin with the raw amino-acid sequence, 163 residues long: Nucleotide-binding protein HDEF_1968 (163 aa).

The protein belongs to the YajQ family.

Functionally, nucleotide-binding protein. This chain is Nucleotide-binding protein HDEF_1968, found in Hamiltonella defensa subsp. Acyrthosiphon pisum (strain 5AT).